The chain runs to 211 residues: Thiamine-phosphate synthase (211 aa).

4-amino-2-methyl-5-(diphosphooxymethyl)pyrimidine contacts are provided by residues 37 to 41 (QLRIK) and asparagine 69. 2 residues coordinate Mg(2+): aspartate 70 and aspartate 89. Serine 108 is a 4-amino-2-methyl-5-(diphosphooxymethyl)pyrimidine binding site. 134-136 (TQT) serves as a coordination point for 2-[(2R,5Z)-2-carboxy-4-methylthiazol-5(2H)-ylidene]ethyl phosphate. Residue lysine 137 participates in 4-amino-2-methyl-5-(diphosphooxymethyl)pyrimidine binding. Residues glycine 166 and 186-187 (VS) each bind 2-[(2R,5Z)-2-carboxy-4-methylthiazol-5(2H)-ylidene]ethyl phosphate.

Belongs to the thiamine-phosphate synthase family. The cofactor is Mg(2+).

The catalysed reaction is 2-[(2R,5Z)-2-carboxy-4-methylthiazol-5(2H)-ylidene]ethyl phosphate + 4-amino-2-methyl-5-(diphosphooxymethyl)pyrimidine + 2 H(+) = thiamine phosphate + CO2 + diphosphate. It carries out the reaction 2-(2-carboxy-4-methylthiazol-5-yl)ethyl phosphate + 4-amino-2-methyl-5-(diphosphooxymethyl)pyrimidine + 2 H(+) = thiamine phosphate + CO2 + diphosphate. It catalyses the reaction 4-methyl-5-(2-phosphooxyethyl)-thiazole + 4-amino-2-methyl-5-(diphosphooxymethyl)pyrimidine + H(+) = thiamine phosphate + diphosphate. The protein operates within cofactor biosynthesis; thiamine diphosphate biosynthesis; thiamine phosphate from 4-amino-2-methyl-5-diphosphomethylpyrimidine and 4-methyl-5-(2-phosphoethyl)-thiazole: step 1/1. Condenses 4-methyl-5-(beta-hydroxyethyl)thiazole monophosphate (THZ-P) and 2-methyl-4-amino-5-hydroxymethyl pyrimidine pyrophosphate (HMP-PP) to form thiamine monophosphate (TMP). The sequence is that of Thiamine-phosphate synthase from Klebsiella pneumoniae subsp. pneumoniae (strain ATCC 700721 / MGH 78578).